Here is a 270-residue protein sequence, read N- to C-terminus: Putative phosphoenolpyruvate synthase regulatory protein (270 aa).

150–157 (GVSRSGKT) lines the ADP pocket.

This sequence belongs to the pyruvate, phosphate/water dikinase regulatory protein family. PSRP subfamily.

It catalyses the reaction [pyruvate, water dikinase] + ADP = [pyruvate, water dikinase]-phosphate + AMP + H(+). The enzyme catalyses [pyruvate, water dikinase]-phosphate + phosphate + H(+) = [pyruvate, water dikinase] + diphosphate. Functionally, bifunctional serine/threonine kinase and phosphorylase involved in the regulation of the phosphoenolpyruvate synthase (PEPS) by catalyzing its phosphorylation/dephosphorylation. The polypeptide is Putative phosphoenolpyruvate synthase regulatory protein (Cupriavidus metallidurans (strain ATCC 43123 / DSM 2839 / NBRC 102507 / CH34) (Ralstonia metallidurans)).